The sequence spans 235 residues: Octanoyltransferase LIP2, mitochondrial (235 aa).

The transit peptide at 1–32 (MRSPRTLEVWKLGTVNYLKSLKLQEKLVSERK) directs the protein to the mitochondrion. Residues 34-218 (HQIPDTLLSL…CLAKAFSYDD (185 aa)) enclose the BPL/LPL catalytic domain. Residues 79–86 (RGGDITFH), 147–149 (AIG), and 160–162 (GLA) each bind substrate. C178 (acyl-thioester intermediate) is an active-site residue.

It belongs to the LipB family. Expressed in leaves. Expressed in roots, rosette leaves, cauline leaves, stems and siliques.

The protein localises to the mitochondrion. The enzyme catalyses octanoyl-[ACP] + L-lysyl-[protein] = N(6)-octanoyl-L-lysyl-[protein] + holo-[ACP] + H(+). It participates in protein modification; protein lipoylation via endogenous pathway; protein N(6)-(lipoyl)lysine from octanoyl-[acyl-carrier-protein]: step 1/2. In terms of biological role, catalyzes the transfer of endogenously produced octanoic acid from octanoyl-acyl-carrier-protein onto the lipoyl domains of lipoate-dependent enzymes. Lipoyl-ACP can also act as a substrate although octanoyl-ACP is likely to be the physiological substrate. Together with LIP1 is essential for mitochondrial protein lipoylation during seed development. Required for the lipoylation of mitochondrial 2-oxoglutarate dehydrogenase component E2 proteins in leaves and roots. The sequence is that of Octanoyltransferase LIP2, mitochondrial from Arabidopsis thaliana (Mouse-ear cress).